A 214-amino-acid chain; its full sequence is MIEMLIGIAFAGFILAIPYVYERVGGKLSLGKLSLGMPKLRSKKEVEEKIKEVDRELEEVVNAGVSINPKPAEEKVVPLDDANVEPDDNLLEEMETASEIKVEAPEPDEEKLPDIPDLPELNSDLDMDFEDLGQEIPLDADEQEEEEEEEEVEEVEFDEEDDLISSLAKEVETKEEEEIDLLRDLKGQKFSAEELEAELQEMIQRLKVLSGGSS.

The stretch at 39-68 forms a coiled coil; the sequence is KLRSKKEVEEKIKEVDRELEEVVNAGVSIN. Over residues 99 to 114 the composition is skewed to basic and acidic residues; that stretch reads EIKVEAPEPDEEKLPD. Positions 99–162 are disordered; the sequence is EIKVEAPEPD…EEVEFDEEDD (64 aa). Positions 123–162 are enriched in acidic residues; sequence SDLDMDFEDLGQEIPLDADEQEEEEEEEEVEEVEFDEEDD. The stretch at 138-212 forms a coiled coil; that stretch reads LDADEQEEEE…IQRLKVLSGG (75 aa).

This is an uncharacterized protein from Archaeoglobus fulgidus (strain ATCC 49558 / DSM 4304 / JCM 9628 / NBRC 100126 / VC-16).